We begin with the raw amino-acid sequence, 41 residues long: Disintegrin viperistatin (41 aa).

Intrachain disulfides connect Cys1/Cys10, Cys6/Cys29, Cys7/Cys34, and Cys19/Cys36. The 41-residue stretch at 1 to 41 (CTTGPCCRQCKLKPAGTTCWKTSRTSHYCTGKSCDCPVYQG) folds into the Disintegrin domain. The Cell attachment site; atypical (KTS) signature appears at 21–23 (KTS).

As to quaternary structure, monomer. In terms of tissue distribution, expressed by the venom gland.

Its subcellular location is the secreted. Potent and highly selective inhibitor of alpha-1/beta-1 (ITGA1/ITGB1) integrin binding to collagen I and IV. Is about 25-fold more potent than obtustatin inhibiting the binding of this integrin to collagen IV. The sequence is that of Disintegrin viperistatin from Daboia palaestinae (Palestine viper).